Here is a 647-residue protein sequence, read N- to C-terminus: Zinc finger protein 567 (647 aa).

The region spanning 32-77 (MDVMLENYCHLISVGCHMTKPDVILKLERGEEPWTSFKGHTCLEEN) is the KRAB domain. Residues K173, K202, and K217 each participate in a glycyl lysine isopeptide (Lys-Gly) (interchain with G-Cter in SUMO2) cross-link. The C2H2-type 1; degenerate zinc-finger motif lies at 210–232 (FEYNDCEKAFLKRGGPVTHSRTY). C2H2-type zinc fingers lie at residues 253–275 (HTCT…QGIH), 281–303 (YQCH…QRTH), 309–331 (FVCN…QRTH), 337–359 (YECP…QRTH), 365–387 (YECS…QRIH), 393–415 (YICK…QRTH), and 421–443 (YICN…EKTH). Residue K447 forms a Glycyl lysine isopeptide (Lys-Gly) (interchain with G-Cter in SUMO2) linkage. C2H2-type zinc fingers lie at residues 449 to 471 (YICN…QRTH), 477 to 499 (YECP…HRTH), 505 to 527 (YECN…QRIH), 533 to 555 (YICN…QKIH), 561 to 583 (YECP…QRTH), 589 to 611 (YKCS…QRTH), and 617 to 639 (YICN…QRTH).

Belongs to the krueppel C2H2-type zinc-finger protein family.

It is found in the nucleus. May be involved in transcriptional regulation. The chain is Zinc finger protein 567 (ZNF567) from Bos taurus (Bovine).